The primary structure comprises 431 residues: Enolase (431 aa).

Gln167 serves as a coordination point for (2R)-2-phosphoglycerate. The Proton donor role is filled by Glu209. Asp246, Glu290, and Asp317 together coordinate Mg(2+). (2R)-2-phosphoglycerate contacts are provided by Lys342, Arg371, Ser372, and Lys393. Lys342 functions as the Proton acceptor in the catalytic mechanism.

The protein belongs to the enolase family. Component of the RNA degradosome, a multiprotein complex involved in RNA processing and mRNA degradation. Requires Mg(2+) as cofactor.

The protein resides in the cytoplasm. It localises to the secreted. It is found in the cell surface. The catalysed reaction is (2R)-2-phosphoglycerate = phosphoenolpyruvate + H2O. The protein operates within carbohydrate degradation; glycolysis; pyruvate from D-glyceraldehyde 3-phosphate: step 4/5. Functionally, catalyzes the reversible conversion of 2-phosphoglycerate (2-PG) into phosphoenolpyruvate (PEP). It is essential for the degradation of carbohydrates via glycolysis. In Yersinia pseudotuberculosis serotype O:1b (strain IP 31758), this protein is Enolase.